Consider the following 275-residue polypeptide: Dihydroxyacetone phosphatase (275 aa).

The active-site Nucleophile is the Asp10. Mg(2+) is bound by residues Asp10, Asp12, and Asp206. Asp12 (proton donor/acceptor) is an active-site residue.

Belongs to the HAD-like hydrolase superfamily. Homohexamer. The cofactor is Mg(2+).

The catalysed reaction is dihydroxyacetone phosphate + H2O = dihydroxyacetone + phosphate. Its function is as follows. Catalyzes dephosphorylation of dihydroxyacetone phosphate (DHAP) to produce 1,3-dihydroxyacetone (DHA). Is the main enzyme responsible for DHA production from catabolism of sugars (glucose, fructose, and sucrose) in C.glutamicum. Displays no activity toward nucleoside monophosphates (AMP, CMP, GMP, or UMP). The protein is Dihydroxyacetone phosphatase of Corynebacterium glutamicum (strain R).